The primary structure comprises 765 residues: Probable glycosyltransferase STELLO2 (765 aa).

The Cytoplasmic portion of the chain corresponds to 1–43; it reads MLVQDRVAPKPPKSRIRELPSRDRFAEPKILDFSSWVSDNVYR. Residues 44–64 traverse the membrane as a helical segment; it reads IVIIFLFIVTVAAFFFLYNTT. Residues 65–765 lie on the Lumenal side of the membrane; that stretch reads DTASLLCFQS…EGDPLLMELV (701 aa). N-linked (GlcNAc...) asparagine glycosylation is found at Asn235 and Asn723.

Belongs to the STELLO family. In terms of assembly, homo- and heterodimer with STL1. Interacts with CESA1, CESA3, CESA4, CESA6, CESA7 and CESA8, but not with GOT1. Expressed in cells that are expanding or producing secondary cell walls.

Its subcellular location is the golgi apparatus membrane. Its function is as follows. Probable glycosyltransferase regulating the assembly and trafficking of cellulose synthase complexes. This is Probable glycosyltransferase STELLO2 from Arabidopsis thaliana (Mouse-ear cress).